We begin with the raw amino-acid sequence, 322 residues long: Probable ethanolamine-phosphate cytidylyltransferase (322 aa).

Belongs to the cytidylyltransferase family.

The catalysed reaction is phosphoethanolamine + CTP + H(+) = CDP-ethanolamine + diphosphate. It functions in the pathway phospholipid metabolism; phosphatidylethanolamine biosynthesis; phosphatidylethanolamine from ethanolamine: step 2/3. The sequence is that of Probable ethanolamine-phosphate cytidylyltransferase (MUQ1) from Encephalitozoon cuniculi (strain GB-M1) (Microsporidian parasite).